Consider the following 539-residue polypeptide: Chaperonin GroEL (539 aa).

ATP-binding positions include 30–33 (TLGP), lysine 51, 87–91 (DGTTT), glycine 415, 479–481 (NAA), and aspartate 495.

The protein belongs to the chaperonin (HSP60) family. As to quaternary structure, forms a cylinder of 14 subunits composed of two heptameric rings stacked back-to-back. Interacts with the co-chaperonin GroES.

Its subcellular location is the cytoplasm. It catalyses the reaction ATP + H2O + a folded polypeptide = ADP + phosphate + an unfolded polypeptide.. Functionally, together with its co-chaperonin GroES, plays an essential role in assisting protein folding. The GroEL-GroES system forms a nano-cage that allows encapsulation of the non-native substrate proteins and provides a physical environment optimized to promote and accelerate protein folding. The protein is Chaperonin GroEL of Kluyvera intermedia (Enterobacter intermedius).